A 148-amino-acid chain; its full sequence is Large ribosomal subunit protein bL9 (148 aa).

The protein belongs to the bacterial ribosomal protein bL9 family.

In terms of biological role, binds to the 23S rRNA. The protein is Large ribosomal subunit protein bL9 of Listeria welshimeri serovar 6b (strain ATCC 35897 / DSM 20650 / CCUG 15529 / CIP 8149 / NCTC 11857 / SLCC 5334 / V8).